A 425-amino-acid chain; its full sequence is Serine--tRNA ligase (425 aa).

The segment at 41–70 (TERSQLQARSNQVGKQVGEKIKSGSDPKGT) is disordered. Residues 44–54 (SQLQARSNQVG) are compositionally biased toward polar residues. Residues 57 to 70 (VGEKIKSGSDPKGT) show a composition bias toward basic and acidic residues. L-serine is bound at residue 234–236 (TSE). Residue 265–267 (RRE) coordinates ATP. Glu-288 contacts L-serine. ATP is bound at residue 352-355 (EISS). Residue Ser-388 coordinates L-serine.

It belongs to the class-II aminoacyl-tRNA synthetase family. Type-1 seryl-tRNA synthetase subfamily. As to quaternary structure, homodimer. The tRNA molecule binds across the dimer.

The protein localises to the cytoplasm. It catalyses the reaction tRNA(Ser) + L-serine + ATP = L-seryl-tRNA(Ser) + AMP + diphosphate + H(+). The catalysed reaction is tRNA(Sec) + L-serine + ATP = L-seryl-tRNA(Sec) + AMP + diphosphate + H(+). It participates in aminoacyl-tRNA biosynthesis; selenocysteinyl-tRNA(Sec) biosynthesis; L-seryl-tRNA(Sec) from L-serine and tRNA(Sec): step 1/1. In terms of biological role, catalyzes the attachment of serine to tRNA(Ser). Is also able to aminoacylate tRNA(Sec) with serine, to form the misacylated tRNA L-seryl-tRNA(Sec), which will be further converted into selenocysteinyl-tRNA(Sec). The chain is Serine--tRNA ligase from Trichodesmium erythraeum (strain IMS101).